The sequence spans 339 residues: U11/U12 small nuclear ribonucleoprotein 48 kDa protein (339 aa).

Residues 55–82 (VVICPYDSNHHMPKSSLAKHMASCRLRK) form a CHHC U11-48K-type zinc finger. Residues cysteine 58, histidine 64, histidine 74, and cysteine 78 each coordinate Zn(2+). Glycyl lysine isopeptide (Lys-Gly) (interchain with G-Cter in SUMO2) cross-links involve residues lysine 87 and lysine 104. Residues 255 to 339 (HWQEEQEKAE…HSHKRRKQKI (85 aa)) form a disordered region. A compositionally biased stretch (basic residues) spans 294–309 (RHRRDRSRSPHKRKRN). The span at 310–328 (KDKDKNCESRRRKERDGER) shows a compositional bias: basic and acidic residues. Over residues 329 to 339 (HHSHKRRKQKI) the composition is skewed to basic residues.

As to quaternary structure, component of the U11/U12 snRNPs that are part of the U12-type spliceosome. Not found in the major spliceosome.

It is found in the nucleus. Functionally, likely involved in U12-type 5' splice site recognition. This Homo sapiens (Human) protein is U11/U12 small nuclear ribonucleoprotein 48 kDa protein (SNRNP48).